Consider the following 282-residue polypeptide: U1 small nuclear ribonucleoprotein A (282 aa).

Alanine 2 bears the N-acetylalanine mark. The RRM 1 domain occupies 10 to 89 (HTIYINNLNE…KPMRIQYAKT (80 aa)). Lysine 60 carries the N6-acetyllysine modification. Residues 101-141 (FVERDRKREKRKPKSQETPAAKKAVQGGAAAPVVGTVQGPV) are disordered. Residues 119 to 141 (PAAKKAVQGGAAAPVVGTVQGPV) are compositionally biased toward low complexity. Arginine 152 is modified (omega-N-methylarginine). Residues 208–282 (HILFLTNLPE…NAMKISFAKK (75 aa)) enclose the RRM 2 domain.

It belongs to the RRM U1 A/B'' family. In terms of assembly, U1 snRNP is composed of the 7 core Sm proteins SNRPB, SNRPD1, SNRPD2, SNRPD3, SNRPE, SNRPF and SNRPG that assemble in a heptameric protein ring on the Sm site of the small nuclear RNA to form the core snRNP, and at least three U1 snRNP-specific proteins SNRNP70/U1-70K, SNRPA/U1-A and SNRPC/U1-C. Interacts with SFPQ; component of a snRNP-free complex with SFPQ.

The protein localises to the nucleus. In terms of biological role, component of the spliceosomal U1 snRNP, which is essential for recognition of the pre-mRNA 5' splice-site and the subsequent assembly of the spliceosome. U1 snRNP is the first snRNP to interact with pre-mRNA. This interaction is required for the subsequent binding of U2 snRNP and the U4/U6/U5 tri-snRNP. SNRPA binds stem loop II of U1 snRNA. In a snRNP-free form (SF-A) may be involved in coupled pre-mRNA splicing and polyadenylation process. May bind preferentially to the 5'-UGCAC-3' motif on RNAs. This Bos taurus (Bovine) protein is U1 small nuclear ribonucleoprotein A (SNRPA).